A 414-amino-acid polypeptide reads, in one-letter code: MDNNNHTFSSWLRSPAHHQWLALEGKRLLGFAKAAKLENGFGGLDDYGRLMVGATAGTMNTARMTHCFAMAHVQGIPGCAALIDHGIAALSGPLHDAEHGGWFSAALEDHGKTDKQAYLHAFVALAASSAVVAGRPAAQALLSDVIQVIQSRFWSDEEGAMRESFSQDWSDEEPYRGANSNMHSTEAFLALADVTGDAQWLDRALSIVERVIHQHAGANNFQVIEHFTSGWQPLPDYNRENPADGFRPFGTTPGHAFEWARLVLHLEAARRRAGRSNPDWLLDDARQLFANACRYGWDVDGAPGIVYTLDWQNKPVVRHRLHWTHCEAAAAAAALLQRTGEQQYEDWYRCFWEFNETLFIDIEHGSWRHELNERNEPSEDIWPGKPDLYHAYQATLLPVLPLAPSLASAMAGLD.

Residues H255 and H390 each act as proton donor/acceptor in the active site.

It belongs to the N-acylglucosamine 2-epimerase family. In terms of assembly, monomer.

It carries out the reaction D-mannose = D-fructose. Its activity is regulated as follows. Strongly inhibited by Ag(2+), Cu(2+) and cetyltrimethyl ammonium bromide (CTAB). Functionally, catalyzes the reversible isomerization of D-mannose to D-fructose. Shows high specific activity towards mannose and fructose, and has no detectable activity towards other monosaccharides and disaccharides. This Pseudomonas cannabina pv. alisalensis protein is D-mannose isomerase.